A 53-amino-acid chain; its full sequence is MRTCSFCNKEIEEGTGKMYVKKDGSIYFFCSSKCEKNMIKLGRVPRKVKWVKE.

Residues Cys-4, Cys-7, Cys-30, and Cys-34 each coordinate Zn(2+). A C4-type zinc finger spans residues 4–34 (CSFCNKEIEEGTGKMYVKKDGSIYFFCSSKC).

Belongs to the eukaryotic ribosomal protein eL24 family. Part of the 50S ribosomal subunit. Forms a cluster with proteins L3 and L14. It depends on Zn(2+) as a cofactor.

Its function is as follows. Binds to the 23S rRNA. This Methanobrevibacter smithii (strain ATCC 35061 / DSM 861 / OCM 144 / PS) protein is Large ribosomal subunit protein eL24.